The chain runs to 263 residues: Hydroxyethylthiazole kinase (263 aa).

Met39 provides a ligand contact to substrate. Residues Lys115 and Thr160 each coordinate ATP. A substrate-binding site is contributed by Gly187.

It belongs to the Thz kinase family. It depends on Mg(2+) as a cofactor.

It catalyses the reaction 5-(2-hydroxyethyl)-4-methylthiazole + ATP = 4-methyl-5-(2-phosphooxyethyl)-thiazole + ADP + H(+). Its pathway is cofactor biosynthesis; thiamine diphosphate biosynthesis; 4-methyl-5-(2-phosphoethyl)-thiazole from 5-(2-hydroxyethyl)-4-methylthiazole: step 1/1. Catalyzes the phosphorylation of the hydroxyl group of 4-methyl-5-beta-hydroxyethylthiazole (THZ). In Staphylococcus saprophyticus subsp. saprophyticus (strain ATCC 15305 / DSM 20229 / NCIMB 8711 / NCTC 7292 / S-41), this protein is Hydroxyethylthiazole kinase.